We begin with the raw amino-acid sequence, 481 residues long: Glutamyl-tRNA(Gln) amidotransferase subunit A (481 aa).

Catalysis depends on charge relay system residues Lys78 and Ser153. Residue Ser177 is the Acyl-ester intermediate of the active site.

It belongs to the amidase family. GatA subfamily. In terms of assembly, heterotrimer of A, B and C subunits.

The enzyme catalyses L-glutamyl-tRNA(Gln) + L-glutamine + ATP + H2O = L-glutaminyl-tRNA(Gln) + L-glutamate + ADP + phosphate + H(+). In terms of biological role, allows the formation of correctly charged Gln-tRNA(Gln) through the transamidation of misacylated Glu-tRNA(Gln) in organisms which lack glutaminyl-tRNA synthetase. The reaction takes place in the presence of glutamine and ATP through an activated gamma-phospho-Glu-tRNA(Gln). The protein is Glutamyl-tRNA(Gln) amidotransferase subunit A of Borrelia garinii subsp. bavariensis (strain ATCC BAA-2496 / DSM 23469 / PBi) (Borreliella bavariensis).